A 425-amino-acid chain; its full sequence is MTPSDICPAIELPSSSRCMRIDYVGHPDAFSSCSNLCPTNLLRCIYSVRKYVLVRALSNFEDNTMFCTLRRSKDANKSYAIHMDDPPFARTKGRLSAIACVDCRASKTRCTGEPEGCKRCTFRKRPCQYPNLRRSNTTQHGEQIEASSSTFTMSDEQGSLGMEVSGQGSLDAQDINFANELTPVETAATMSDTMMSSECVTLNDSTITSSTIPFSIDSDIDLWNDVTGMAGSDTTSLWDYNAGSNDNIAAISTKEYVCACFAQALKTYESAEVHLVWSGRAHTADIMGLLQQQKNTISDCERLLDCVQCIEKSAFVVLLISICGKVLRSVEDASRELRPRDSVTEPTTKSKDPSQACLNIDANSISRHQLDDDDRLVVLGSLFLNRVTKLRSLIAAIEMLVMKRNWHIQRDMVRQLKSRVRLIDT.

A DNA-binding region (zn(2)-C6 fungal-type) is located at residues 100–127 (CVDCRASKTRCTGEPEGCKRCTFRKRPC). The segment at 132–159 (LRRSNTTQHGEQIEASSSTFTMSDEQGS) is disordered. Over residues 133-157 (RRSNTTQHGEQIEASSSTFTMSDEQ) the composition is skewed to polar residues.

The protein resides in the nucleus. In terms of biological role, transcription factor involved in regulation of gene cluster that mediates the biosynthesis of aphidicolin. This Neocamarosporium betae (Beet black rot fungus) protein is Aspyridones cluster regulator (TF).